Here is a 194-residue protein sequence, read N- to C-terminus: Recombination protein RecR (194 aa).

Residues 52 to 67 (CTECRTFTEEEVCHIC) form a C4-type zinc finger. One can recognise a Toprim domain in the interval 76-171 (GQICVVESPA…EASRIAHGVP (96 aa)).

This sequence belongs to the RecR family.

May play a role in DNA repair. It seems to be involved in an RecBC-independent recombinational process of DNA repair. It may act with RecF and RecO. The sequence is that of Recombination protein RecR from Vibrio campbellii (strain ATCC BAA-1116).